Reading from the N-terminus, the 366-residue chain is MSGAEGTRDGASPTGGSALAAYTTLRLGGPAAGFVVAEDAETLADAVREADAAGSRLLVLGGGSNLVVADEGFDGHVVRIATRGLRFDSVGDGLVQLTAEAGEDWDAVVAETVRQGLGGLECLSGIPGLTGATPVQNVGAYGVEVSELLLSVDLLDRRTGNVRTVRAEDLGLVYRGSVLKHSDQAVVLRVRFLLRDGGRSAPVRYAELARTLDAEPGSRVDVAEAREAVLALRRGKGMVLDPADHDTWSAGSFFTNPIVEAADLSAVLSRIGAKVGPDQRVPQYPASDGRTKLSAAWLIERAGFGKGHPGPGGRARLSTKHTLALTNRGEATTADLLSLAREVRDGVLAQFGVSLAPEPVLVDCAL.

The FAD-binding PCMH-type domain maps to 27 to 197 (LGGPAAGFVV…LRVRFLLRDG (171 aa)). The active site involves Arg-175. The active-site Proton donor is the Ser-252. The active site involves Glu-358.

The protein belongs to the MurB family. Requires FAD as cofactor.

The protein localises to the cytoplasm. The catalysed reaction is UDP-N-acetyl-alpha-D-muramate + NADP(+) = UDP-N-acetyl-3-O-(1-carboxyvinyl)-alpha-D-glucosamine + NADPH + H(+). The protein operates within cell wall biogenesis; peptidoglycan biosynthesis. In terms of biological role, cell wall formation. The polypeptide is UDP-N-acetylenolpyruvoylglucosamine reductase (Saccharopolyspora erythraea (strain ATCC 11635 / DSM 40517 / JCM 4748 / NBRC 13426 / NCIMB 8594 / NRRL 2338)).